A 101-amino-acid polypeptide reads, in one-letter code: Small ribosomal subunit protein uS14 (101 aa).

Positions 1–20 (MAKTSAVEKNKRRRKLVANH) are disordered. The span at 10-20 (NKRRRKLVANH) shows a compositional bias: basic residues.

It belongs to the universal ribosomal protein uS14 family. In terms of assembly, part of the 30S ribosomal subunit. Contacts proteins S3 and S10.

Binds 16S rRNA, required for the assembly of 30S particles and may also be responsible for determining the conformation of the 16S rRNA at the A site. In Sinorhizobium medicae (strain WSM419) (Ensifer medicae), this protein is Small ribosomal subunit protein uS14.